Reading from the N-terminus, the 865-residue chain is MKTAQIRQKFLDYFESKGHIIESSASLIPHNDKTLLFVNAGMVPFKDVFSGIEKRPYTRAVSVQRCARAGGKHNDLENVGYTARHHTFFEMLGNFSFGDYFKREAIHYAWEFLTKELNLPKKNLWVSVFDQDNEAEDIWVNEIGFPKNRISRCGAKDNFWQMGDTGPCGPSSEIFYDHGEHIAGGPPGHANEDGDRYIEIWNLVFTEFDKQEDGYLKPLAVPCVDTGMGLERLVAVLQHKNNNYDTDGFQNLVKAVVNLTPKFNNIKDNNASVRVITDHIRSAAFMIVDGVIPSNEGRGYVLRRIIRRGIRHGHKMGIGKVFFYRLASILALEFKDVYPELEQALSKVEKVLKREEQRFSKTLDQGMSILEEVITNFKGSEINGKIVFKLYDTYGFPVDLTSDIARERNLTIDMSGFEVEMTKQRDRARQASDFKISEKGVDIAERTEFLGYKQLKNVSLIQAIINNNELVEKIEVGDHGIVVLAQSSFYAESGGQIGDKGILSNMQVEFRVDHTNKQKSGAFEHHGVLNKGVLKVSDAVQANVDKKSRKCIARNHSATHLLHAALHIVLGKAVMQKGSLVGSEKLRFDFSYDKVIVKSDLERIESIVNRKILGNTKVYTDITNIEGAKKKGAMTLFGKKYGDTVRVLTMGKNEFSVELCGGTHVNQLGDIGLFRIISESSVSAGVRRIEALTGYDAYQFDNRIQNSLNKIAQMTRSSNTEVVGKVTQLIKQQKELEKQIATFQKKIANNQGDDLIVQAQEVKGIKLLSTVVEGVTSKDLRNIVDKLKDKLSSAVIVLAVVINDKVSLVTGVTKDLTKQYQARKILNHVAKQIGGKGDGRSDMAQGGGTKPECLIKALASVKSLI.

Positions 556, 560, 660, and 664 each coordinate Zn(2+).

This sequence belongs to the class-II aminoacyl-tRNA synthetase family. Zn(2+) is required as a cofactor.

The protein localises to the cytoplasm. The catalysed reaction is tRNA(Ala) + L-alanine + ATP = L-alanyl-tRNA(Ala) + AMP + diphosphate. In terms of biological role, catalyzes the attachment of alanine to tRNA(Ala) in a two-step reaction: alanine is first activated by ATP to form Ala-AMP and then transferred to the acceptor end of tRNA(Ala). Also edits incorrectly charged Ser-tRNA(Ala) and Gly-tRNA(Ala) via its editing domain. The protein is Alanine--tRNA ligase of Vesicomyosocius okutanii subsp. Calyptogena okutanii (strain HA).